A 448-amino-acid polypeptide reads, in one-letter code: JmjC domain-containing protein D (448 aa).

The 144-residue stretch at 305 to 448 (EQIPQLRNDI…SLSQSFSIFP (144 aa)) folds into the JmjC domain.

The polypeptide is JmjC domain-containing protein D (jcdD) (Dictyostelium discoideum (Social amoeba)).